A 310-amino-acid chain; its full sequence is Ribosomal protein L11 methyltransferase (310 aa).

4 residues coordinate S-adenosyl-L-methionine: Thr-153, Gly-174, Asp-196, and Asn-239.

Belongs to the methyltransferase superfamily. PrmA family.

The protein localises to the cytoplasm. It carries out the reaction L-lysyl-[protein] + 3 S-adenosyl-L-methionine = N(6),N(6),N(6)-trimethyl-L-lysyl-[protein] + 3 S-adenosyl-L-homocysteine + 3 H(+). Functionally, methylates ribosomal protein L11. The sequence is that of Ribosomal protein L11 methyltransferase from Janthinobacterium sp. (strain Marseille) (Minibacterium massiliensis).